Consider the following 552-residue polypeptide: Protein TRM32 (552 aa).

Positions 295-379 are disordered; sequence TDLPRDSSTS…NKTAEKTETL (85 aa). The segment covering 331–351 has biased composition (basic and acidic residues); it reads VRAEKEEKYEVQEERSQENHL. Residues 352 to 371 show a composition bias toward polar residues; it reads DSSNQRILQQEPDSVPSTNK.

The polypeptide is Protein TRM32 (TRM32) (Arabidopsis thaliana (Mouse-ear cress)).